A 22-amino-acid chain; its full sequence is Superoxide dismutase [Cu-Zn] (22 aa).

The protein belongs to the Cu-Zn superoxide dismutase family. As to quaternary structure, homodimer. Cu cation is required as a cofactor. It depends on Zn(2+) as a cofactor.

It localises to the cytoplasm. The catalysed reaction is 2 superoxide + 2 H(+) = H2O2 + O2. In terms of biological role, destroys radicals which are normally produced within the cells and which are toxic to biological systems. This chain is Superoxide dismutase [Cu-Zn], found in Hordeum vulgare (Barley).